The following is a 72-amino-acid chain: UPF0270 protein YheU (72 aa).

Belongs to the UPF0270 family.

The polypeptide is UPF0270 protein YheU (Shigella dysenteriae serotype 1 (strain Sd197)).